The sequence spans 417 residues: MTYIEILGQNAKKASQSVARLSTASKNEILRDLARNIVADTETILTENARDVAKAKDNGISEIMVDRLRLNKDRIQAIANGIYQVADLADPIGQVVSGYTNLDGLKILKKRVPLGVIAMIFESRPNVSVDAFSLAFKTGNAIILRGGKDAIFSNTALVNCMRQTLQDTGHNPDIVQLVEDTSHVVAEELMQATDYVDVLIPRGGAKLIQTVKEKSKIPVIETGVGNVHIYIDEFADLDMAAKIVINAKTQRPSVCNAAEGLVVHQAIAKGFLSQLEKMLKESNQSVEFRADEEALQLLENAVAASESDYATEFLDYIMSVKVVDSFEQAISWINKYSSHHSEAIITNNISRAEIFQDMVDAAAVYVNASTRFTDGFVFGLGAEIGISTQKLHARGPMGLEALTSTKYYINGTGQVRE.

This sequence belongs to the gamma-glutamyl phosphate reductase family.

It localises to the cytoplasm. The catalysed reaction is L-glutamate 5-semialdehyde + phosphate + NADP(+) = L-glutamyl 5-phosphate + NADPH + H(+). It participates in amino-acid biosynthesis; L-proline biosynthesis; L-glutamate 5-semialdehyde from L-glutamate: step 2/2. Its function is as follows. Catalyzes the NADPH-dependent reduction of L-glutamate 5-phosphate into L-glutamate 5-semialdehyde and phosphate. The product spontaneously undergoes cyclization to form 1-pyrroline-5-carboxylate. This Streptococcus agalactiae serotype III (strain NEM316) protein is Gamma-glutamyl phosphate reductase.